The following is an 882-amino-acid chain: Protein PML (882 aa).

The segment at 1-48 is disordered; sequence MEPAPARSPRPQQDPARPQEPTMPPPETPSEGRQPSPSPSPTERAPAS. Ser-8 is subject to Phosphoserine; by HIPK2. 2 positions are modified to phosphoserine; by HIPK2 and MAPK1: Ser-36 and Ser-38. Ser-48 bears the Phosphoserine mark. Residues Cys-57 and Cys-60 each contribute to the Zn(2+) site. The RING-type zinc finger occupies 57 to 92; the sequence is CQQCQAEAKCPKLLPCLHTLCSGCLEASGMQCPICQ. A Glycyl lysine isopeptide (Lys-Gly) (interchain with G-Cter in SUMO1); alternate cross-link involves residue Lys-65. Residue Lys-65 forms a Glycyl lysine isopeptide (Lys-Gly) (interchain with G-Cter in SUMO2); alternate linkage. Zn(2+) is bound by residues Cys-72, His-74, Cys-77, Cys-80, Cys-88, and Cys-91. Ser-117 is subject to Phosphoserine; by CHEK2. The B box-type 1; atypical zinc-finger motif lies at 124 to 166; sequence DAQAVCTRCKESADFWCFECEQLLCAKCFEAHQWFLKHEARPL. The Zn(2+) site is built by Cys-129, Cys-132, Cys-151, and His-155. Residue Lys-160 forms a Glycyl lysine isopeptide (Lys-Gly) (interchain with G-Cter in SUMO1); alternate linkage. A Glycyl lysine isopeptide (Lys-Gly) (interchain with G-Cter in SUMO2); alternate cross-link involves residue Lys-160. A Glycyl lysine isopeptide (Lys-Gly) (interchain with G-Cter in SUMO1P1/SUMO5); alternate cross-link involves residue Lys-160. The segment at 183-236 adopts a B box-type 2 zinc-finger fold; the sequence is KTNNIFCSNPNHRTPTLTSIYCRGCSKPLCCSCALLDSSHSELKCDISAEIQQR. Cys-189, His-194, Cys-215, and His-222 together coordinate Zn(2+). Residues 228 to 253 are a coiled coil; that stretch reads DISAEIQQRQEELDAMTQALQEQDSA. Residue Lys-380 forms a Glycyl lysine isopeptide (Lys-Gly) (interchain with G-Cter in SUMO2); alternate linkage. Residue Lys-380 forms a Glycyl lysine isopeptide (Lys-Gly) (interchain with G-Cter in /SUMO5); alternate linkage. Lys-380 is covalently cross-linked (Glycyl lysine isopeptide (Lys-Gly) (interchain with G-Cter in ubiquitin); alternate). Residue Lys-394 forms a Glycyl lysine isopeptide (Lys-Gly) (interchain with G-Cter in SUMO2) linkage. Lys-400 is covalently cross-linked (Glycyl lysine isopeptide (Lys-Gly) (interchain with G-Cter in SUMO1P1/SUMO5); alternate). Residues Lys-400 and Lys-401 each participate in a glycyl lysine isopeptide (Lys-Gly) (interchain with G-Cter in ubiquitin); alternate cross-link. Residue Lys-401 forms a Glycyl lysine isopeptide (Lys-Gly) (interchain with G-Cter in SUMO2); alternate linkage. The residue at position 403 (Ser-403) is a Phosphoserine; by MAPK1 and MAPK7. The interval 448-555 is interaction with PER2; sequence GAHPVPVYAF…ASGAGEAEER (108 aa). Lys-460 is covalently cross-linked (Glycyl lysine isopeptide (Lys-Gly) (interchain with G-Cter in SUMO2)). The disordered stretch occupies residues 467–589; that stretch reads DVSNTTTAQK…SESSDLQLEG (123 aa). The span at 468–484 shows a compositional bias: polar residues; that stretch reads VSNTTTAQKRKCSQTQC. Lys-476 participates in a covalent cross-link: Glycyl lysine isopeptide (Lys-Gly) (interchain with G-Cter in SUMO2); alternate. A Glycyl lysine isopeptide (Lys-Gly) (interchain with G-Cter in ubiquitin); alternate cross-link involves residue Lys-476. The Nuclear localization signal motif lies at 476-490; sequence KRKCSQTQCPRKVIK. Lys-478 is covalently cross-linked (Glycyl lysine isopeptide (Lys-Gly) (interchain with G-Cter in SUMO2)). Glycyl lysine isopeptide (Lys-Gly) (interchain with G-Cter in SUMO2); alternate cross-links involve residues Lys-487 and Lys-490. Lys-487 is modified (N6-acetyllysine; alternate). The span at 489–501 shows a compositional bias: basic and acidic residues; the sequence is IKMESEEGKEARL. Lys-490 participates in a covalent cross-link: Glycyl lysine isopeptide (Lys-Gly) (interchain with G-Cter in SUMO1); alternate. Lys-490 participates in a covalent cross-link: Glycyl lysine isopeptide (Lys-Gly) (interchain with G-Cter in SUMO1P1/SUMO5); alternate. The residue at position 493 (Ser-493) is a Phosphoserine. Lys-497 is covalently cross-linked (Glycyl lysine isopeptide (Lys-Gly) (interchain with G-Cter in SUMO1); alternate). Residue Lys-497 forms a Glycyl lysine isopeptide (Lys-Gly) (interchain with G-Cter in SUMO2); alternate linkage. Lys-497 is covalently cross-linked (Glycyl lysine isopeptide (Lys-Gly) (interchain with G-Cter in SUMO1P1/SUMO5); alternate). Ser-504 carries the post-translational modification Phosphoserine. At Ser-505 the chain carries Phosphoserine; by MAPK1. Over residues 505–516 the composition is skewed to polar residues; sequence SPEQPRPSTSKA. Phosphoserine is present on Ser-512. Lys-515 bears the N6-acetyllysine mark. Ser-518, Ser-527, and Ser-530 each carry phosphoserine. Ser-518 is modified (phosphoserine; by CDK1 and CDK2). Residues Ser-527 and Ser-530 each carry the phosphoserine; by MAPK1 modification. Positions 556 to 562 are sumo interaction motif (SIM); sequence VVVISSS. Residue Ser-565 is modified to Phosphoserine. Position 565 is a phosphoserine; by CK2 (Ser-565). Phosphothreonine is present on Thr-867.

As to quaternary structure, key component of PML bodies. PML bodies are formed by the interaction of PML homodimers (via SUMO-binding motif) with sumoylated PML, leading to the assembly of higher oligomers. Several types of PML bodies have been observed. PML bodies can form hollow spheres that can sequester target proteins inside. Interacts (via SUMO-binding motif) with sumoylated proteins. Interacts (via C-terminus) with p53/TP53. Recruits p53/TP53 and CHEK2 into PML bodies, which promotes p53/TP53 phosphorylation at 'Ser-20' and prevents its proteasomal degradation. Interacts with MDM2, and sequesters MDM2 in the nucleolus, thereby preventing ubiquitination of p53/TP53. Interaction with PML-RARA oncoprotein and certain viral proteins causes disassembly of PML bodies and abolishes the normal PML function. Interacts with HIPK2, TERT, SIRT1, TOPBP1, TRIM27 and TRIM69. Interacts with ELF4 (via C-terminus). Interacts with ITPR3. Interacts (in the cytoplasm) with TGFBR1, TGFBR2 and PKM. Interacts (via the coiled-coil domain and when sumoylated) with SATB1. Interacts with UBE2I; the interaction is enhanced by arsenic binding. Interacts (PML-RARA oncoprotein, via the coiled-coil domain) with UBE2I; the interaction is enhanced by arsenic binding and is required for PML-RARA oncoprotein sumoylation and inhibition of RARA transactivational activity. Interacts with RB1, PPP1A, SMAD2, SMAD3, DAXX, RPL11 and MTOR. Interacts with PPARGC1A and KAT2A. Interacts with CSNK2A1 and CSNK2A3. Interacts with ANKRD2; the interaction is direct. Interacts (via SUMO-interacting motif) with sumoylated MORC3. Isoform PML-1, isoform PML-2, isoform PML-3, isoform PML-4, isoform PML-5 and isoform PML-6 interact with RNF4. Isoform PML-1 interacts with NLRP3. Isoform PML-1, isoform PML-2, isoform PML-3, isoform PML-4 and isoform PML-5 interact with MAGEA2, RBL2, PER2 and E2F4. Isoform PML-2 interacts with CIITA. Isoform PML-2, isoform PML-3 and isoform PML-4 interact with TBX2. Isoform PML-4 interacts with RANBP2, HDAC7, KAT6A, WRN, PIN1, TBX3 and phosphorylated MAPK1/ERK2. Isoform PML-4 interacts with the CTNNB1 and TCF7L2/TCF4 complex. Isoform PML-4 preferentially interacts with MAPK7/BMK1 although other isoforms (isoform PML-1, isoform PML-2, isoform PML-3 and isoform PML-6) also interact with it. Isoform PML-12 interacts with PIAS1, PIAS2 (isoform PIAS2-alpha) and CSNK2A1/CK2. Interacts with TRIM16. Interacts with PRDM1/Blimp-1. Interacts (via RING-type zinc finger) with EIF4E; the interaction results in conformational changes of both interacting proteins and reduces EIF4E affinity for the 5' m7G cap of mRNA, thus reducing EIF4E-mediated mRNA nuclear export. (Microbial infection) Interacts with Lassa virus Z protein and rabies virus phosphoprotein. In terms of assembly, (Microbial infection) Isoform PML-1 interacts with herpes simplex virus-1/HHV-1 ICP0. As to quaternary structure, (Microbial infection) Isoform PML-2 interacts with human adenovirus 2 E1A and this interaction stimulates E1A-dependent transcriptional activation. (Microbial infection) Isoform PML-4 interacts with VZV capsid protein VP26/ORF23 capsid protein. In terms of assembly, (Microbial infection) The sumoylated isoform PML-4 interacts with encephalomyocarditis virus (EMCV) RNA-directed RNA polymerase 3D-POL (P3D-POL). As to quaternary structure, (Microbial infection) Isoform PML-6 interacts with moloney murine leukemia virus (MoMLV) integrase (IN) and reverse transcriptase (RT). (Microbial infection) Isoform PML-4 and isoform PML-5 interact with human adenovirus 5 E1B-55K protein; these interactions promote efficient subnuclear targeting of E1B-55K to PML nuclear bodies. In terms of assembly, (Microbial infection) Isoform PML-3 interacts (via RING-type zinc finger) with human foamy virus bel1/tas and bet. As to quaternary structure, (Microbial infection) Interacts with human cytomegalovirus (HHV-5) immediate early protein IE1; this interaction mediates PML desumoylation and PML-mediated sumoylation of IE1. Ubiquitinated; mediated by RNF4, RNF111, UHRF1, UBE3A/E6AP, BCR(KLHL20) E3 ubiquitin ligase complex E3 ligase complex, SIAH1 or SIAH2 and leading to subsequent proteasomal degradation. Ubiquitination by BCR(KLHL20) E3 ubiquitin ligase complex E3 ligase complex requires CDK1/2-mediated phosphorylation at Ser-518 which in turn is recognized by prolyl-isopeptidase PIN1 and PIN1-catalyzed isomerization further potentiates PML interaction with KLHL20. 'Lys-6'-, 'Lys-11'-, 'Lys-48'- and 'Lys-63'-linked polyubiquitination by RNF4 is polysumoylation-dependent. Ubiquitination by RNF111 is polysumoylation-dependent. Post-translationally, sumoylation regulates PML's: stability in response to extracellular or intracellular stimuli, transcription directly and indirectly, through sequestration of or dissociation of the transcription factors from PML-NBs, ability to regulate apoptosis and its anti-viral activities. It is also essential for: maintaining proper PML nuclear bodies (PML-NBs) structure and normal function, recruitment of components of PML-NBs, the turnover and retention of PML in PML-NBs and the integrity of PML-NBs. Undergoes 'Lys-11'-linked sumoylation. Sumoylation on all three sites (Lys-65, Lys-160 and Lys-490) is required for nuclear body formation. Sumoylation on Lys-160 is a prerequisite for sumoylation on Lys-65. Lys-65 and Lys-160 are sumoylated by PISA1 and PIAS2. PIAS1-mediated sumoylation of PML promotes its interaction with CSNK2A1/CK2 and phosphorylation at Ser-565 which in turn triggers its ubiquitin-mediated degradation. PIAS1-mediated sumoylation of PML-RARA promotes its ubiquitin-mediated degradation. The PML-RARA fusion protein requires the coiled-coil domain for sumoylation. Sumoylation at Lys-490 by RANBP2 is essential for the proper assembly of PML-NBs. SUMO1P1/SUMO5 conjugated PML at Lys-160, Lys-380, Lys-400, Lys-490 and Lys-497, but Lys-380, Lys-400 and Lys-497 are not key acceptor lysines. SUMO1P1/SUMO5 forms polymeric chain on Lys-160 of PML by successive conjugation at 'Lys-18'; facilitating recruitment of PML-NB components, which enlarges PML. SUMO1P1/SUMO5 conjugation of PML increases SUMO2/3 conjugation, which leads to the recruitment of RNF4 and ubiquitin-dependent disintegration of PML-NBs. SUMO1P1/SUMO5 monoconjugated Lys-490. DNA damage triggers its sumoylation while some but not all viral infections can abolish sumoylation. Desumoylated by SENP1, SENP2, SENP3, SENP5 and SENP6. Arsenic induces PML and PML-RARA polysumoylation and their subsequent RNF4-dependent ubiquitination and proteasomal degradation, and is used as treatment in acute promyelocytic leukemia (APL). The nuclear isoforms (isoform PML-1, isoform PML-2, isoform PML-3, isoform PML-4, isoform PML-5 and isoform PML-6) show an increased sumoylation in response to arsenic trioxide. The cytoplasmic isoform PML-7 is not sumoylated. In terms of processing, phosphorylation is a major regulatory mechanism that controls PML protein abundance and the number and size of PML nuclear bodies (PML-NBs). Phosphorylated in response to DNA damage, probably by ATR. HIPK2-mediated phosphorylation at Ser-8, Ser-36 and Ser-38 leads to increased accumulation of PML protein and its sumoylation and is required for the maximal pro-apoptotic activity of PML after DNA damage. CHEK2-mediated phosphorylation at Ser-117 is important for PML-mediated apoptosis following DNA damage. MAPK1-mediated phosphorylations at Ser-403, Ser-505, Ser-527 and Ser-530 and CDK1/2-mediated phosphorylation at Ser-518 promote PIN1-dependent PML degradation. CK2-mediated phosphorylation at Ser-565 primes PML ubiquitination via an unidentified ubiquitin ligase. (Microbial infection) Upon infection with Epstein-Barr virus, phosphorylated by CK2. Viral EBNA1 increases the association of CK2 with PML proteins, which increases PML phosphorylation by CK2, triggering the USP7-dependent polyubiquitylation and degradation of PML. Post-translationally, acetylation at Lys-487 is essential for its nuclear localization. Deacetylated at Lys-487 by SIRT1 and this deacetylation promotes PML control of PER2 nuclear localization. In terms of processing, (Microbial infection) Immediate early protein IE1 of human cytomegalovirus (HHV-5) interferes with the sumoylation of PML. Immediate early protein IE1 inhibits PML de novo sumoylation. (Microbial infection) Cleaved at two different sites by enterovirus 71 protease 3C, leading to impaired PML-Nuclear bodies formation.

The protein localises to the nucleus. The protein resides in the nucleoplasm. It localises to the cytoplasm. It is found in the PML body. Its subcellular location is the nucleolus. The protein localises to the endoplasmic reticulum membrane. The protein resides in the early endosome membrane. The protein operates within protein modification; protein sumoylation. Functions via its association with PML-nuclear bodies (PML-NBs) in a wide range of important cellular processes, including tumor suppression, transcriptional regulation, apoptosis, senescence, DNA damage response, and viral defense mechanisms. Acts as the scaffold of PML-NBs allowing other proteins to shuttle in and out, a process which is regulated by SUMO-mediated modifications and interactions. Inhibits EIF4E-mediated mRNA nuclear export by reducing EIF4E affinity for the 5' 7-methylguanosine (m7G) cap of target mRNAs. Isoform PML-4 has a multifaceted role in the regulation of apoptosis and growth suppression: activates RB1 and inhibits AKT1 via interactions with PP1 and PP2A phosphatases respectively, negatively affects the PI3K pathway by inhibiting MTOR and activating PTEN, and positively regulates p53/TP53 by acting at different levels (by promoting its acetylation and phosphorylation and by inhibiting its MDM2-dependent degradation). Isoform PML-4 also: acts as a transcriptional repressor of TBX2 during cellular senescence and the repression is dependent on a functional RBL2/E2F4 repressor complex, regulates double-strand break repair in gamma-irradiation-induced DNA damage responses via its interaction with WRN, acts as a negative regulator of telomerase by interacting with TERT, and regulates PER2 nuclear localization and circadian function. Isoform PML-6 inhibits specifically the activity of the tetrameric form of PKM. The nuclear isoforms (isoform PML-1, isoform PML-2, isoform PML-3, isoform PML-4 and isoform PML-5) in concert with SATB1 are involved in local chromatin-loop remodeling and gene expression regulation at the MHC-I locus. Isoform PML-2 is required for efficient IFN-gamma induced MHC II gene transcription via regulation of CIITA. Cytoplasmic PML is involved in the regulation of the TGF-beta signaling pathway. PML also regulates transcription activity of ELF4 and can act as an important mediator for TNF-alpha- and IFN-alpha-mediated inhibition of endothelial cell network formation and migration. In terms of biological role, exhibits antiviral activity against both DNA and RNA viruses. The antiviral activity can involve one or several isoform(s) and can be enhanced by the permanent PML-NB-associated protein DAXX or by the recruitment of p53/TP53 within these structures. Isoform PML-4 restricts varicella zoster virus (VZV) via sequestration of virion capsids in PML-NBs thereby preventing their nuclear egress and inhibiting formation of infectious virus particles. The sumoylated isoform PML-4 restricts rabies virus by inhibiting viral mRNA and protein synthesis. The cytoplasmic isoform PML-14 can restrict herpes simplex virus-1 (HHV-1) replication by sequestering the viral E3 ubiquitin-protein ligase ICP0 in the cytoplasm. Isoform PML-6 shows restriction activity towards human cytomegalovirus (HHV-5) and influenza A virus strains PR8(H1N1) and ST364(H3N2). Sumoylated isoform PML-4 and isoform PML-12 show antiviral activity against encephalomyocarditis virus (EMCV) by promoting nuclear sequestration of viral polymerase (P3D-POL) within PML NBs. Isoform PML-3 exhibits antiviral activity against poliovirus by inducing apoptosis in infected cells through the recruitment and the activation of p53/TP53 in the PML-NBs. Isoform PML-3 represses human foamy virus (HFV) transcription by complexing the HFV transactivator, bel1/tas, preventing its binding to viral DNA. PML may positively regulate infectious hepatitis C viral (HCV) production and isoform PML-2 may enhance adenovirus transcription. Functions as an E3 SUMO-protein ligase that sumoylates (HHV-5) immediate early protein IE1, thereby participating in the antiviral response. Isoforms PML-3 and PML-6 display the highest levels of sumoylation activity. This chain is Protein PML (PML), found in Homo sapiens (Human).